The chain runs to 425 residues: Imidazolonepropionase (425 aa).

Positions 78 and 80 each coordinate Fe(3+). The Zn(2+) site is built by His-78 and His-80. Residues Arg-87, Tyr-150, and His-183 each coordinate 4-imidazolone-5-propanoate. Residue Tyr-150 coordinates N-formimidoyl-L-glutamate. His-248 contributes to the Fe(3+) binding site. His-248 provides a ligand contact to Zn(2+). Residue Gln-251 coordinates 4-imidazolone-5-propanoate. Residue Asp-323 coordinates Fe(3+). Asp-323 lines the Zn(2+) pocket. Residues Asn-325 and Gly-327 each coordinate N-formimidoyl-L-glutamate. Thr-328 is a 4-imidazolone-5-propanoate binding site.

The protein belongs to the metallo-dependent hydrolases superfamily. HutI family. Requires Zn(2+) as cofactor. It depends on Fe(3+) as a cofactor.

Its subcellular location is the cytoplasm. It catalyses the reaction 4-imidazolone-5-propanoate + H2O = N-formimidoyl-L-glutamate. It participates in amino-acid degradation; L-histidine degradation into L-glutamate; N-formimidoyl-L-glutamate from L-histidine: step 3/3. In terms of biological role, catalyzes the hydrolytic cleavage of the carbon-nitrogen bond in imidazolone-5-propanoate to yield N-formimidoyl-L-glutamate. It is the third step in the universal histidine degradation pathway. In Polaromonas sp. (strain JS666 / ATCC BAA-500), this protein is Imidazolonepropionase.